Here is a 547-residue protein sequence, read N- to C-terminus: CTP synthase (547 aa).

The segment at 1–265 (MARYVFITGG…DQAVLDAFGI (265 aa)) is amidoligase domain. Serine 13 provides a ligand contact to CTP. Serine 13 serves as a coordination point for UTP. Residues 14–19 (SLGKGL) and aspartate 71 each bind ATP. Residues aspartate 71 and glutamate 139 each coordinate Mg(2+). CTP is bound by residues 146–148 (DIE), 186–191 (KTKPTQ), and lysine 222. Residues 186-191 (KTKPTQ) and lysine 222 contribute to the UTP site. Positions 291–546 (RVAIVGKYTQ…IRAAVEVSRL (256 aa)) constitute a Glutamine amidotransferase type-1 domain. Glycine 353 serves as a coordination point for L-glutamine. Residue cysteine 380 is the Nucleophile; for glutamine hydrolysis of the active site. Residues 381-384 (LGMQ), glutamate 404, and arginine 474 contribute to the L-glutamine site. Catalysis depends on residues histidine 519 and glutamate 521.

Belongs to the CTP synthase family. In terms of assembly, homotetramer.

It catalyses the reaction UTP + L-glutamine + ATP + H2O = CTP + L-glutamate + ADP + phosphate + 2 H(+). The enzyme catalyses L-glutamine + H2O = L-glutamate + NH4(+). It carries out the reaction UTP + NH4(+) + ATP = CTP + ADP + phosphate + 2 H(+). It participates in pyrimidine metabolism; CTP biosynthesis via de novo pathway; CTP from UDP: step 2/2. Its activity is regulated as follows. Allosterically activated by GTP, when glutamine is the substrate; GTP has no effect on the reaction when ammonia is the substrate. The allosteric effector GTP functions by stabilizing the protein conformation that binds the tetrahedral intermediate(s) formed during glutamine hydrolysis. Inhibited by the product CTP, via allosteric rather than competitive inhibition. Catalyzes the ATP-dependent amination of UTP to CTP with either L-glutamine or ammonia as the source of nitrogen. Regulates intracellular CTP levels through interactions with the four ribonucleotide triphosphates. The chain is CTP synthase from Cereibacter sphaeroides (strain ATCC 17025 / ATH 2.4.3) (Rhodobacter sphaeroides).